Consider the following 853-residue polypeptide: MKAEQQHTPMMQQYLRLKAENPDILLFYRMGDFYELFYDDAKKASQLLDISLTKRGASAGEPIPMAGVPFHAVEGYLAKLVQLGESVAICEQVGDPATSKGPVERKVVRIVTPGTVTDEALLSERLDNLIAAIYHHNGKFGYATLDVTSGRFQLVEPQSEEAMAAELQRTSPRELLFPEDFEPVHLMTGRNGNRRRPVWEFELETAKQQLNQQFGTKDLVGFGVENAMLGLCAAGCLIQYVKDTQRTALPHIRALTYDRQDDSVILDAATRRNLELTQNLAGGSDNTLAAVLDRCATPMGSRMLKRWIHQPMRCITTREHRLDAIAELKEQALFSDIHPVVKQIGDIERILARLALRSARPRDLARLRHAMQQLPELAQTLSSLGNSHLKSLATAAAPMDDVCELLERAIKENPPVVIRDGGVIAEGYSADLDEWRDLADGATGYLEKLEEEERDRHGIDTLKVGYNNVHGFYIQVSRGQSHLVPPHYVRRQTLKNAERYIIPELKEHEDKVLNSKSKALAIEKQLWEELFDLLLPHLARLQELAAAVAQLDVLQNLAERADTLDYCRPNLTKDPVVHITAGRHPVVEQVTSDPFIANPIELNSQRKMLIITGPNMGGKSTYMRQTALIALMAHIGSYVPAESATIGSIDRIFTRIGASDDLASGRSTFMVEMTETANILHNATANSLVLMDEIGRGTSTYDGLSLAWASAHWLATQIGAMTLFATHYFELTELPNQLPHLANVHLDAVEHGDSIAFMHAVQEGAASKSYGLAVAGLAGVPKTVIKNARQKLSQLELLSAEGSQPKARTVDIANQLSLIPEPSEVEQALASIDPDDLTPRQALEALYRLKKML.

613–620 (GPNMGGKS) is an ATP binding site.

It belongs to the DNA mismatch repair MutS family.

In terms of biological role, this protein is involved in the repair of mismatches in DNA. It is possible that it carries out the mismatch recognition step. This protein has a weak ATPase activity. This chain is DNA mismatch repair protein MutS, found in Vibrio vulnificus (strain YJ016).